Reading from the N-terminus, the 108-residue chain is Large ribosomal subunit protein uL23 (108 aa).

Belongs to the universal ribosomal protein uL23 family. As to quaternary structure, part of the 50S ribosomal subunit. Contacts protein L29, and trigger factor when it is bound to the ribosome.

One of the early assembly proteins it binds 23S rRNA. One of the proteins that surrounds the polypeptide exit tunnel on the outside of the ribosome. Forms the main docking site for trigger factor binding to the ribosome. The chain is Large ribosomal subunit protein uL23 from Polaromonas naphthalenivorans (strain CJ2).